A 437-amino-acid polypeptide reads, in one-letter code: Glucose-1-phosphate adenylyltransferase (437 aa).

Alpha-D-glucose 1-phosphate contacts are provided by residues Tyr-113, Gly-179, 194–195 (EK), and Ser-212.

Belongs to the bacterial/plant glucose-1-phosphate adenylyltransferase family. In terms of assembly, homotetramer.

It carries out the reaction alpha-D-glucose 1-phosphate + ATP + H(+) = ADP-alpha-D-glucose + diphosphate. The protein operates within glycan biosynthesis; glycogen biosynthesis. Involved in the biosynthesis of ADP-glucose, a building block required for the elongation reactions to produce glycogen. Catalyzes the reaction between ATP and alpha-D-glucose 1-phosphate (G1P) to produce pyrophosphate and ADP-Glc. This Haemophilus influenzae (strain ATCC 51907 / DSM 11121 / KW20 / Rd) protein is Glucose-1-phosphate adenylyltransferase.